The chain runs to 707 residues: Elongation factor G (707 aa).

Positions 8–297 (ERVRNIGIAA…AVVDYLPSPV (290 aa)) constitute a tr-type G domain. GTP is bound by residues 17–24 (AHIDAGKT), 96–100 (DTPGH), and 150–153 (NKMD).

This sequence belongs to the TRAFAC class translation factor GTPase superfamily. Classic translation factor GTPase family. EF-G/EF-2 subfamily.

It is found in the cytoplasm. Its function is as follows. Catalyzes the GTP-dependent ribosomal translocation step during translation elongation. During this step, the ribosome changes from the pre-translocational (PRE) to the post-translocational (POST) state as the newly formed A-site-bound peptidyl-tRNA and P-site-bound deacylated tRNA move to the P and E sites, respectively. Catalyzes the coordinated movement of the two tRNA molecules, the mRNA and conformational changes in the ribosome. The sequence is that of Elongation factor G from Synechococcus sp. (strain JA-2-3B'a(2-13)) (Cyanobacteria bacterium Yellowstone B-Prime).